A 57-amino-acid chain; its full sequence is Large ribosomal subunit protein bL32c (57 aa).

Residues 1 to 21 (MAVPKKRTSKSKKNLRKNTWK) form a disordered region.

Belongs to the bacterial ribosomal protein bL32 family.

It is found in the plastid. It localises to the chloroplast. The polypeptide is Large ribosomal subunit protein bL32c (Stigeoclonium helveticum (Green alga)).